The chain runs to 356 residues: MSLQRFISEAISPWMKKDGPDSDIVLSSRIRLARNLQSFRFPLLATIEESKQLVEHVKHHLAESSYHTNRFELLCMDDMKPNVKRVLVEKHLISPHLAEESKHGAVMLSEDESISIMINEEDHLRIQCLFPGFQLSEALVLASGIDDWIEGKVDYAFDEKRGYLTSCPTNVGTGLRASVMMHLPALVMTQQINRILPAINQLGLVVRGIYGEGSEALGNLFQISNQMTLGKSEEDIVEDLRGVVMQLIQQERAARKRLLESSRLQLEDRVYRSYGILAHSRIIESKEATQKLSDVRLGIDLGLLKGVSGNILNELMILTQPGFLQQYAGTVLTADQRDERRAALIRARLKLEDESN.

In terms of domain architecture, Phosphagen kinase C-terminal spans 24–254 (IVLSSRIRLA…MQLIQQERAA (231 aa)). Residues 27 to 31 (SSRIR), His91, Arg125, 176 to 180 (RASVM), and 207 to 212 (RGIYGE) contribute to the ATP site. An RDXXRA motif of the pArg binding pocket involved in allosteric regulation motif is present at residues 337–342 (RDERRA).

This sequence belongs to the ATP:guanido phosphotransferase family.

It carries out the reaction L-arginyl-[protein] + ATP = N(omega)-phospho-L-arginyl-[protein] + ADP + H(+). With respect to regulation, appears to be allosterically activated by the binding of pArg-containing polypeptides to the pArg-binding pocket localized in the C-terminal domain of McsB. Its function is as follows. Catalyzes the specific phosphorylation of arginine residues in a large number of proteins. Is part of the bacterial stress response system. Protein arginine phosphorylation has a physiologically important role and is involved in the regulation of many critical cellular processes, such as protein homeostasis, motility, competence, and stringent and stress responses, by regulating gene expression and protein activity. This is Protein-arginine kinase from Halalkalibacterium halodurans (strain ATCC BAA-125 / DSM 18197 / FERM 7344 / JCM 9153 / C-125) (Bacillus halodurans).